A 43-amino-acid chain; its full sequence is Neurotrophin-4 (43 aa).

This sequence belongs to the NGF-beta family.

NT-4 could play a role in oogenesis and/or early embryogenesis. NT-4 interacts with the low affinity NGF receptor and elicits neurite outgrowth from explanted dorsal root ganglia with no and lower activity in sympathetic and nodose ganglia, respectively. In Macrovipera lebetinus (Levantine viper), this protein is Neurotrophin-4 (NTF4).